Consider the following 313-residue polypeptide: tRNA dimethylallyltransferase (313 aa).

Residue 11-18 participates in ATP binding; it reads GPTACGKT. Position 13 to 18 (13 to 18) interacts with substrate; it reads TACGKT. Interaction with substrate tRNA regions lie at residues 36–39, 160–164, and 243–248; these read DSAL, QRIGR, and RCVGYR.

This sequence belongs to the IPP transferase family. In terms of assembly, monomer. Mg(2+) serves as cofactor.

It carries out the reaction adenosine(37) in tRNA + dimethylallyl diphosphate = N(6)-dimethylallyladenosine(37) in tRNA + diphosphate. Its function is as follows. Catalyzes the transfer of a dimethylallyl group onto the adenine at position 37 in tRNAs that read codons beginning with uridine, leading to the formation of N6-(dimethylallyl)adenosine (i(6)A). The chain is tRNA dimethylallyltransferase from Neisseria gonorrhoeae (strain NCCP11945).